The following is an 86-amino-acid chain: Large ribosomal subunit protein bL27 (86 aa).

The segment at 1–26 (MATKKAGGSSRNGRDSAGRRLGVKKS) is disordered.

It belongs to the bacterial ribosomal protein bL27 family.

The chain is Large ribosomal subunit protein bL27 from Rickettsia akari (strain Hartford).